The primary structure comprises 201 residues: Cutinase (201 aa).

Positions 1–20 (MKTSAQQLLSLLLLPLSAIA) are cleaved as a signal peptide. C31 and C105 are disulfide-bonded. Residue S116 is the Nucleophile of the active site. The cysteines at positions 164 and 171 are disulfide-linked. D168 is a catalytic residue. Catalysis depends on H181, which acts as the Proton donor/acceptor.

The protein belongs to the cutinase family. In terms of processing, the 2 disulfide bonds play a critical role in holding the catalytic residues in juxta-position; reduction of the disulfide bridges results in the complete inactivation of the enzyme.

Its subcellular location is the secreted. The enzyme catalyses cutin + H2O = cutin monomers.. In terms of biological role, catalyzes the hydrolysis of complex carboxylic polyesters found in the cell wall of plants. Degrades cutin, a macromolecule that forms the structure of the plant cuticle. Allows pathogenic fungi to penetrate through the cuticular barrier into the host plant during the initial stage of fungal infection. The polypeptide is Cutinase (CUT1) (Monilinia fructicola (Brown rot fungus)).